Consider the following 330-residue polypeptide: 5'-AMP-activated protein kinase subunit gamma-1 (330 aa).

Low complexity predominate over residues 1-12; sequence MESVAAESAPAP. The tract at residues 1-25 is disordered; it reads MESVAAESAPAPENEHSQETPESNS. CBS domains are found at residues 42 to 102, 124 to 186, and 197 to 259; these read PTSS…KSAL, SFKP…PKPE, and IGTY…NLDV. ADP is bound by residues R69, 84–89, V129, 150–151, and K169; these read MLTITD and HR. AMP is bound by residues R69, 84-89, V129, H150, 150-151, K169, T199, A204, 225-226, and 241-244; these read MLTITD, HR, SA, and SKFD. Residues R69, 84–89, V129, 150–151, R151, and K169 each bind ATP; these read MLTITD and HR. The AMPK pseudosubstrate signature appears at 137–158; the sequence is LFDAVSSLIRNKIHRLPVIDPE. 241–244 serves as a coordination point for ADP; the sequence is SKFD. 241–244 provides a ligand contact to ATP; that stretch reads SKFD. Phosphoserine; by ULK1 is present on S260. A Phosphothreonine; by ULK1 modification is found at T262. R268 contributes to the ADP binding site. R268 contacts AMP. R268 is a binding site for ATP. S269 carries the post-translational modification Phosphoserine; by ULK1. In terms of domain architecture, CBS 4 spans 271-328; that stretch reads YFEGVLKCYLHETLEAIINRLVEAEVHRLVVVDEHDVVKGIVSLSDILQALVLTGGEK. Residues L276 and 297–298 each bind ADP; that span reads HR. Residues L276, H297, 297–298, and 313–316 each bind AMP; these read HR and SLSD. Residues L276 and 297 to 298 contribute to the ATP site; that span reads HR.

Belongs to the 5'-AMP-activated protein kinase gamma subunit family. AMPK is a heterotrimer of an alpha catalytic subunit (PRKAA1 or PRKAA2), a beta (PRKAB1 or PRKAB2) and a gamma non-catalytic subunits (PRKAG1, PRKAG2 or PRKAG3). Interacts with FNIP1 and FNIP2. Phosphorylated by ULK1 and ULK2; leading to negatively regulate AMPK activity and suggesting the existence of a regulatory feedback loop between ULK1, ULK2 and AMPK. There is some ambiguity for a phosphosite: Ser-260/Thr-262. In terms of processing, glycosylated; O-GlcNAcylated by OGT, promoting the AMP-activated protein kinase (AMPK) activity. In terms of tissue distribution, highly expressed in heart and brain, also found in kidney, white adipose tissue, lung and spleen.

Functionally, AMP/ATP-binding subunit of AMP-activated protein kinase (AMPK), an energy sensor protein kinase that plays a key role in regulating cellular energy metabolism. In response to reduction of intracellular ATP levels, AMPK activates energy-producing pathways and inhibits energy-consuming processes: inhibits protein, carbohydrate and lipid biosynthesis, as well as cell growth and proliferation. AMPK acts via direct phosphorylation of metabolic enzymes, and by longer-term effects via phosphorylation of transcription regulators. Also acts as a regulator of cellular polarity by remodeling the actin cytoskeleton; probably by indirectly activating myosin. Gamma non-catalytic subunit mediates binding to AMP, ADP and ATP, leading to activate or inhibit AMPK: AMP-binding results in allosteric activation of alpha catalytic subunit (PRKAA1 or PRKAA2) both by inducing phosphorylation and preventing dephosphorylation of catalytic subunits. ADP also stimulates phosphorylation, without stimulating already phosphorylated catalytic subunit. ATP promotes dephosphorylation of catalytic subunit, rendering the AMPK enzyme inactive. The protein is 5'-AMP-activated protein kinase subunit gamma-1 (Prkag1) of Rattus norvegicus (Rat).